The chain runs to 437 residues: Phosphomethylpyrimidine synthase (437 aa).

Substrate contacts are provided by residues asparagine 69, methionine 98, tyrosine 127, histidine 163, 185–187, 226–229, and glutamate 265; these read SRG and DALR. Residue histidine 269 participates in Zn(2+) binding. A substrate-binding site is contributed by tyrosine 292. Histidine 333 contributes to the Zn(2+) binding site. [4Fe-4S] cluster contacts are provided by cysteine 409, cysteine 412, and cysteine 416.

It belongs to the ThiC family. It depends on [4Fe-4S] cluster as a cofactor.

It catalyses the reaction 5-amino-1-(5-phospho-beta-D-ribosyl)imidazole + S-adenosyl-L-methionine = 4-amino-2-methyl-5-(phosphooxymethyl)pyrimidine + CO + 5'-deoxyadenosine + formate + L-methionine + 3 H(+). The protein operates within cofactor biosynthesis; thiamine diphosphate biosynthesis. Catalyzes the synthesis of the hydroxymethylpyrimidine phosphate (HMP-P) moiety of thiamine from aminoimidazole ribotide (AIR) in a radical S-adenosyl-L-methionine (SAM)-dependent reaction. In Alkaliphilus oremlandii (strain OhILAs) (Clostridium oremlandii (strain OhILAs)), this protein is Phosphomethylpyrimidine synthase.